A 169-amino-acid polypeptide reads, in one-letter code: Large ribosomal subunit protein uL10 (169 aa).

The protein belongs to the universal ribosomal protein uL10 family. Part of the ribosomal stalk of the 50S ribosomal subunit. The N-terminus interacts with L11 and the large rRNA to form the base of the stalk. The C-terminus forms an elongated spine to which L12 dimers bind in a sequential fashion forming a multimeric L10(L12)X complex.

Functionally, forms part of the ribosomal stalk, playing a central role in the interaction of the ribosome with GTP-bound translation factors. In Rickettsia bellii (strain OSU 85-389), this protein is Large ribosomal subunit protein uL10.